Consider the following 382-residue polypeptide: Anhydro-N-acetylmuramic acid kinase (382 aa).

Residue 15 to 22 participates in ATP binding; that stretch reads GTSLDGVD.

This sequence belongs to the anhydro-N-acetylmuramic acid kinase family.

The catalysed reaction is 1,6-anhydro-N-acetyl-beta-muramate + ATP + H2O = N-acetyl-D-muramate 6-phosphate + ADP + H(+). Its pathway is amino-sugar metabolism; 1,6-anhydro-N-acetylmuramate degradation. It participates in cell wall biogenesis; peptidoglycan recycling. In terms of biological role, catalyzes the specific phosphorylation of 1,6-anhydro-N-acetylmuramic acid (anhMurNAc) with the simultaneous cleavage of the 1,6-anhydro ring, generating MurNAc-6-P. Is required for the utilization of anhMurNAc either imported from the medium or derived from its own cell wall murein, and thus plays a role in cell wall recycling. The polypeptide is Anhydro-N-acetylmuramic acid kinase (Haemophilus influenzae (strain ATCC 51907 / DSM 11121 / KW20 / Rd)).